The sequence spans 800 residues: MTRNKFIPNKFSIISFSVLLFAISSSQAIEVNAMNEHYTESDIKRNHKTEKNKTEKEKFKDSINNLVKTEFTNETLDKIQQTQDLLKKIPKDVLEIYSELGGEIYFTDIDLVEHKELQDLSEEEKNSMNSRGEKVPFASRFVFEKKRETPKLIINIKDYAINSEQSKEVYYEIGKGISLDIISKDKSLDPEFLNLIKSLSDDSDSSDLLFSQKFKEKLELNNKSIDINFIKENLTEFQHAFSLAFSYYFAPDHRTVLELYAPDMFEYMNKLEKGGFEKISESLKKEGVEKDRIDVLKGEKALKASGLVPEHADAFKKIARELNTYILFRPVNKLATNLIKSGVATKGLNVHGKSSDWGPVAGYIPFDQDLSKKHGQQLAVEKGNLENKKSITEHEGEIGKIPLKLDHLRIEELKENGIILKGKKEIDNGKKYYLLESNNQVYEFRISDENNEVQYKTKEGKITVLGEKFNWRNIEVMAKNVEGVLKPLTADYDLFALAPSLTEIKKQIPQKEWDKVVNTPNSLEKQKGVTNLLIKYGIERKPDSTKGTLSNWQKQMLDRLNEAVKYTGYTGGDVVNHGTEQDNEEFPEKDNEIFIINPEGEFILTKNWEMTGRFIEKNITGKDYLYYFNRSYNKIAPGNKAYIEWTDPITKAKINTIPTSAEFIKNLSSIRRSSNVGVYKDSGDKDEFAKKESVKKIAGYLSDYYNSANHIFSQEKKRKISIFRGIQAYNEIENVLKSKQIAPEYKNYFQYLKERITNQVQLLLTHQKSNIEFKLLYKQLNFTENETDNFEVFQKIIDEK.

An N-terminal signal peptide occupies residues 1-33; the sequence is MTRNKFIPNKFSIISFSVLLFAISSSQAIEVNA. Positions 60–273 constitute an ATLF-like domain; the sequence is KDSINNLVKT…MFEYMNKLEK (214 aa). Positions 294–349 are catalytic CA1; the sequence is DVLKGEKALKASGLVPEHADAFKKIARELNTYILFRPVNKLATNLIKSGVATKGLN. Residues 350 to 489 form a catalytic CB region; sequence VHGKSSDWGP…NVEGVLKPLT (140 aa). Histidine 351 serves as the catalytic Proton acceptor. The segment at 490-622 is catalytic CA2; sequence ADYDLFALAP…RFIEKNITGK (133 aa). 2 residues coordinate Mg(2+): aspartate 491 and aspartate 493. 3',5'-cyclic AMP contacts are provided by residues threonine 548 and 577–579; that span reads HGT. Histidine 577 contributes to the Mg(2+) binding site. The interaction with calmodulin stretch occupies residues 623 to 800; that stretch reads DYLYYFNRSY…EVFQKIIDEK (178 aa).

This sequence belongs to the adenylyl cyclase class-2 family. Interacts (via ATLF domain) with the cleaved form of protective antigen (PA-63) anthrax toxin; interaction is required for EF translocation into the host cytoplasm. It depends on Ca(2+) as a cofactor.

Its subcellular location is the secreted. The protein localises to the host cytoplasm. The protein resides in the host cytosol. The enzyme catalyses ATP = 3',5'-cyclic AMP + diphosphate. With respect to regulation, host calmodulin is an absolute requirement for its activation. Inhibited by ethyl 5-aminopyrazolo[1,5-a]quinazoline-3-carboxylate. Edema factor (EF), which constitutes one of the three proteins composing the anthrax toxin, causes edema in the host. Acts as a calmodulin-dependent adenylyl cyclase by converting ATP to cAMP, leading to dramatic elevation of intracellular cAMP levels in the host, thereby causing edema. EF is not toxic by itself and only acts as an edema factor when associated with protective antigen (PA) to form the edema toxin (EdTx). Required for the survival of germinated spores within macrophages at the early stages of infection. This Bacillus anthracis protein is Calmodulin-sensitive adenylate cyclase (cya).